The following is a 179-amino-acid chain: Bifunctional protein PyrR (179 aa).

The PRPP-binding signature appears at 100-112; sequence VILVDDVLFTGRT.

The protein belongs to the purine/pyrimidine phosphoribosyltransferase family. PyrR subfamily. Homodimer and homohexamer; in equilibrium.

The catalysed reaction is UMP + diphosphate = 5-phospho-alpha-D-ribose 1-diphosphate + uracil. In terms of biological role, regulates transcriptional attenuation of the pyrimidine nucleotide (pyr) operon by binding in a uridine-dependent manner to specific sites on pyr mRNA. This disrupts an antiterminator hairpin in the RNA and favors formation of a downstream transcription terminator, leading to a reduced expression of downstream genes. Also displays a weak uracil phosphoribosyltransferase activity which is not physiologically significant. The polypeptide is Bifunctional protein PyrR (Geobacillus thermodenitrificans (strain NG80-2)).